Consider the following 275-residue polypeptide: Sulfur carrier protein FdhD (275 aa).

The active-site Cysteine persulfide intermediate is C121. Residue F258–R263 coordinates Mo-bis(molybdopterin guanine dinucleotide).

This sequence belongs to the FdhD family.

It is found in the cytoplasm. In terms of biological role, required for formate dehydrogenase (FDH) activity. Acts as a sulfur carrier protein that transfers sulfur from IscS to the molybdenum cofactor prior to its insertion into FDH. The chain is Sulfur carrier protein FdhD from Yersinia enterocolitica serotype O:8 / biotype 1B (strain NCTC 13174 / 8081).